Consider the following 62-residue polypeptide: MDIVKSINTSVDAVLDELDCAYFAVTLKVEFKTGKLLVCIGFGDTLLAARDKAYAKLGLSTI.

In Porcine transmissible gastroenteritis coronavirus (strain FS772/70) (TGEV), this protein is Non-structural protein 3a.